Reading from the N-terminus, the 314-residue chain is uncharacterized protein (314 aa).

2 stretches are compositionally biased toward basic residues: residues 1 to 16 (MAGNSKRRGAVRKAGT) and 49 to 65 (AAKRAAKAAKQQQRRPA). The interval 1 to 73 (MAGNSKRRGA…PARKTDETEL (73 aa)) is disordered. S-adenosyl-L-methionine-binding residues include G266, I286, and L295.

It belongs to the class IV-like SAM-binding methyltransferase superfamily. RNA methyltransferase TrmH family.

This is an uncharacterized protein from Mycobacterium sp. (strain KMS).